A 219-amino-acid polypeptide reads, in one-letter code: Elongation factor Ts (219 aa).

The segment at T82 to V85 is involved in Mg(2+) ion dislocation from EF-Tu.

It belongs to the EF-Ts family.

It is found in the cytoplasm. In terms of biological role, associates with the EF-Tu.GDP complex and induces the exchange of GDP to GTP. It remains bound to the aminoacyl-tRNA.EF-Tu.GTP complex up to the GTP hydrolysis stage on the ribosome. The chain is Elongation factor Ts from Trichodesmium erythraeum (strain IMS101).